We begin with the raw amino-acid sequence, 542 residues long: Membrane protein insertase YidC (542 aa).

A helical membrane pass occupies residues Asn6–Asp26. Over residues Val32–Pro41 the composition is skewed to polar residues. The interval Val32–Ser57 is disordered. 5 helical membrane passes run Leu326–Phe346, Phe350–Tyr370, Gly421–Leu441, Leu458–Met478, and Val501–Gly521.

This sequence belongs to the OXA1/ALB3/YidC family. Type 1 subfamily. In terms of assembly, interacts with the Sec translocase complex via SecD. Specifically interacts with transmembrane segments of nascent integral membrane proteins during membrane integration.

The protein localises to the cell inner membrane. Functionally, required for the insertion and/or proper folding and/or complex formation of integral membrane proteins into the membrane. Involved in integration of membrane proteins that insert both dependently and independently of the Sec translocase complex, as well as at least some lipoproteins. Aids folding of multispanning membrane proteins. This is Membrane protein insertase YidC from Shewanella piezotolerans (strain WP3 / JCM 13877).